Consider the following 147-residue polypeptide: Large ribosomal subunit protein bL9 (147 aa).

It belongs to the bacterial ribosomal protein bL9 family.

Binds to the 23S rRNA. The polypeptide is Large ribosomal subunit protein bL9 (Nitratiruptor sp. (strain SB155-2)).